An 85-amino-acid chain; its full sequence is Large ribosomal subunit protein bL27 (85 aa).

The segment at 1 to 22 is disordered; the sequence is MAHKKAGGSTRNGRDSESKRLG.

It belongs to the bacterial ribosomal protein bL27 family.

The polypeptide is Large ribosomal subunit protein bL27 (Vibrio vulnificus (strain CMCP6)).